The chain runs to 1139 residues: Dual 3',5'-cyclic-AMP and -GMP phosphodiesterase beta (1139 aa).

Disordered regions lie at residues 1–42 and 154–177; these read MGKV…NINK and GISE…STSN. Residues 1–429 are Cytoplasmic-facing; the sequence is MGKVEDFEEH…LNLNNWISSR (429 aa). Over residues 9–22 the composition is skewed to basic and acidic residues; it reads EHNKNSNQDIEKNV. A compositionally biased stretch (polar residues) spans 29-42; the sequence is NSNTINDQNENINK. The chain crosses the membrane as a helical span at residues 430-450; the sequence is MIIIGIVMLILSFIIWPLTTW. Over 451 to 462 the chain is Extracellular; the sequence is SLKTSTWGRETY. A helical membrane pass occupies residues 463–483; sequence IIILFHTLMAINTLILIFFII. Residues 484-498 are Cytoplasmic-facing; sequence IGSTELCKYSECMSY. The chain crosses the membrane as a helical span at residues 499–519; sequence VLFSLMVALWGLWNIAIGLTL. Residues 520 to 536 are Extracellular-facing; it reads EYNPNLSEMPTTTYELE. N-linked (GlcNAc...) asparagine glycosylation is present at asparagine 524. Residues 537 to 557 traverse the membrane as a helical segment; sequence MIYVLTYIYGFLPLVIIDIFF. Residues 558–564 are Cytoplasmic-facing; sequence PSRTKYN. A helical membrane pass occupies residues 565–585; the sequence is WIIHLIFIFLNSSSIILVGSA. Topologically, residues 586–592 are extracellular; it reads KPDFVPE. The chain crosses the membrane as a helical span at residues 593 to 613; the sequence is IYVVFRILAYTTLCIFLYIGS. At 614–1139 the chain is on the cytoplasmic side; the sequence is YTSELQIRYV…TLFFIKNVSD (526 aa). The PDEase domain maps to 775-1098; the sequence is INISQLTKMI…IMWDTLMKEE (324 aa). Catalysis depends on histidine 847, which acts as the Proton donor. 847–851 serves as a coordination point for a nucleoside 3',5'-cyclic phosphate; that stretch reads HNTIH. Residues histidine 851, histidine 887, aspartate 888, and aspartate 1000 each contribute to the a divalent metal cation site. The a nucleoside 3',5'-cyclic phosphate site is built by aspartate 888, aspartate 1000, and glutamine 1052.

Belongs to the cyclic nucleotide phosphodiesterase family. Requires a divalent metal cation as cofactor.

It is found in the cell membrane. Its subcellular location is the endoplasmic reticulum membrane. The catalysed reaction is 3',5'-cyclic GMP + H2O = GMP + H(+). It catalyses the reaction 3',5'-cyclic AMP + H2O = AMP + H(+). It functions in the pathway purine metabolism; 3',5'-cyclic GMP degradation; GMP from 3',5'-cyclic GMP: step 1/1. It participates in purine metabolism; 3',5'-cyclic AMP degradation; AMP from 3',5'-cyclic AMP: step 1/1. Functionally, plays a role in signal transduction by regulating the intracellular concentration of cyclic nucleotides cAMP and cGMP. Catalyzes the hydrolysis of both cAMP and cGMP to 5'-AMP and 5'-GMP, respectively. By regulating cAMP levels during the asexual blood stage and, thus PKA activation, required for merozoite invasion of erythrocytes and for the parasite development immediately following invasion. The sequence is that of Dual 3',5'-cyclic-AMP and -GMP phosphodiesterase beta from Plasmodium falciparum (isolate 3D7).